Reading from the N-terminus, the 406-residue chain is Probable 2,3-bisphosphoglycerate-independent phosphoglycerate mutase (406 aa).

Belongs to the BPG-independent phosphoglycerate mutase family. A-PGAM subfamily.

The enzyme catalyses (2R)-2-phosphoglycerate = (2R)-3-phosphoglycerate. It participates in carbohydrate degradation; glycolysis; pyruvate from D-glyceraldehyde 3-phosphate: step 3/5. In terms of biological role, catalyzes the interconversion of 2-phosphoglycerate and 3-phosphoglycerate. In Thermus thermophilus (strain ATCC 27634 / DSM 579 / HB8), this protein is Probable 2,3-bisphosphoglycerate-independent phosphoglycerate mutase.